Here is a 92-residue protein sequence, read N- to C-terminus: UPF0473 protein Cbei_1107 (92 aa).

The protein belongs to the UPF0473 family.

This chain is UPF0473 protein Cbei_1107, found in Clostridium beijerinckii (strain ATCC 51743 / NCIMB 8052) (Clostridium acetobutylicum).